We begin with the raw amino-acid sequence, 806 residues long: GPI ethanolamine phosphate transferase 2 (806 aa).

3 N-linked (GlcNAc...) asparagine glycosylation sites follow: asparagine 70, asparagine 184, and asparagine 242. Helical transmembrane passes span 396 to 416 (MLFL…YCYI), 425 to 445 (SVLM…SSFV), and 451 to 471 (IWWW…PSCT). N-linked (GlcNAc...) asparagine glycosylation is present at asparagine 488. Transmembrane regions (helical) follow at residues 508-528 (PSIK…DGFT), 532-552 (LLSI…TCWA), 593-613 (LFFK…VVFA), 624-644 (LFTI…FLVF), 664-684 (CEMF…QFGG), 706-726 (IYVV…YWSL), 745-765 (LSSM…CICM), and 782-804 (LLGW…LLMV).

This sequence belongs to the PIGG/PIGN/PIGO family. PIGG subfamily.

It is found in the endoplasmic reticulum membrane. Its pathway is glycolipid biosynthesis; glycosylphosphatidylinositol-anchor biosynthesis. Ethanolamine phosphate transferase involved in glycosylphosphatidylinositol-anchor biosynthesis. Transfers ethanolamine phosphate to the GPI second mannose. The polypeptide is GPI ethanolamine phosphate transferase 2 (LAS21) (Eremothecium gossypii (strain ATCC 10895 / CBS 109.51 / FGSC 9923 / NRRL Y-1056) (Yeast)).